Here is a 334-residue protein sequence, read N- to C-terminus: Lipoyl synthase (334 aa).

Positions 1-36 (MSDALIAPNASSSEAPQSPAEHYDPTRKQKSADKTA) are disordered. Low complexity predominate over residues 7 to 20 (APNASSSEAPQSPA). The segment covering 21–36 (EHYDPTRKQKSADKTA) has biased composition (basic and acidic residues). [4Fe-4S] cluster contacts are provided by C81, C86, C92, C107, C111, C114, and S321. The region spanning 92–310 (CFGKGTATFM…EEEAYKMGFT (219 aa)) is the Radical SAM core domain.

This sequence belongs to the radical SAM superfamily. Lipoyl synthase family. The cofactor is [4Fe-4S] cluster.

It is found in the cytoplasm. It carries out the reaction [[Fe-S] cluster scaffold protein carrying a second [4Fe-4S](2+) cluster] + N(6)-octanoyl-L-lysyl-[protein] + 2 oxidized [2Fe-2S]-[ferredoxin] + 2 S-adenosyl-L-methionine + 4 H(+) = [[Fe-S] cluster scaffold protein] + N(6)-[(R)-dihydrolipoyl]-L-lysyl-[protein] + 4 Fe(3+) + 2 hydrogen sulfide + 2 5'-deoxyadenosine + 2 L-methionine + 2 reduced [2Fe-2S]-[ferredoxin]. The protein operates within protein modification; protein lipoylation via endogenous pathway; protein N(6)-(lipoyl)lysine from octanoyl-[acyl-carrier-protein]: step 2/2. In terms of biological role, catalyzes the radical-mediated insertion of two sulfur atoms into the C-6 and C-8 positions of the octanoyl moiety bound to the lipoyl domains of lipoate-dependent enzymes, thereby converting the octanoylated domains into lipoylated derivatives. The polypeptide is Lipoyl synthase (Cupriavidus taiwanensis (strain DSM 17343 / BCRC 17206 / CCUG 44338 / CIP 107171 / LMG 19424 / R1) (Ralstonia taiwanensis (strain LMG 19424))).